Consider the following 447-residue polypeptide: Tol-Pal system protein TolB (447 aa).

The signal sequence occupies residues Met-1–Ala-34. The segment at Arg-426–Ser-447 is disordered.

The protein belongs to the TolB family. In terms of assembly, the Tol-Pal system is composed of five core proteins: the inner membrane proteins TolA, TolQ and TolR, the periplasmic protein TolB and the outer membrane protein Pal. They form a network linking the inner and outer membranes and the peptidoglycan layer.

Its subcellular location is the periplasm. In terms of biological role, part of the Tol-Pal system, which plays a role in outer membrane invagination during cell division and is important for maintaining outer membrane integrity. This Rhodopseudomonas palustris (strain BisB18) protein is Tol-Pal system protein TolB.